A 450-amino-acid polypeptide reads, in one-letter code: MSVSGGRTRVGRYELGRTLGEGTFAKVKFARNADSGENVAIKILDKDKVLKHKMIAQIKREISTMKLIRHPNVIRMHEVMASKTKIYIVMELVTGGELFDKIASRGRLKEDDARKYFQQLINAVDYCHSRGVYHRDLKPENLLLDASGTLKVSDFGLSALSQQVREDGLLHTTCGTPNYVAPEVINNKGYDGAKADLWSCGVILFVLMAGYLPFEDSNLMSLYKKIFKADFSCPSWFSTSAKKLIKKILDPNPSTRITIAELINNEWFKKGYQPPRFETADVNLDDINSIFNESGDQTQLVVERREERPSVMNAFELISTSQGLNLGTLFEKQSQGSVKRETRFASRLPANEILSKIEAAAGPMGFNVQKRNYKLKLQGENPGRKGQLAIATEVFEVTPSLYMVELRKSNGDTLEFHKFYHNISNGLKDVMWKPESSIIAGDEIQHRRSP.

Positions 13–268 (YELGRTLGEG…IAELINNEWF (256 aa)) constitute a Protein kinase domain. Residues 19–27 (LGEGTFAKV) and Lys42 each bind ATP. Residue Asp136 is the Proton acceptor of the active site. Residues 154–183 (DFGLSALSQQVREDGLLHTTCGTPNYVAPE) form an activation loop region. An NAF domain is found at 306 to 331 (EERPSVMNAFELISTSQGLNLGTLFE). The PPI stretch occupies residues 339–368 (KRETRFASRLPANEILSKIEAAAGPMGFNV).

This sequence belongs to the protein kinase superfamily. CAMK Ser/Thr protein kinase family. SNF1 subfamily. Requires Mn(2+) as cofactor.

It carries out the reaction L-seryl-[protein] + ATP = O-phospho-L-seryl-[protein] + ADP + H(+). It catalyses the reaction L-threonyl-[protein] + ATP = O-phospho-L-threonyl-[protein] + ADP + H(+). Functionally, CIPK serine-threonine protein kinases interact with CBL proteins. Binding of a CBL protein to the regulatory NAF domain of CIPK protein lead to the activation of the kinase in a calcium-dependent manner. This Oryza sativa subsp. japonica (Rice) protein is CBL-interacting protein kinase 23 (CIPK23).